Reading from the N-terminus, the 195-residue chain is Protein Fer3 (195 aa).

2 disordered regions span residues 1–24 (MQHP…LWGQ) and 56–82 (PLVP…RRRV). Residues 63–75 (STNGRANGSSSSS) are compositionally biased toward low complexity. The bHLH domain occupies 86–138 (AQRRAANIRERRRMFNLNEAFDKLRRKVPTFAYEKRLSRIETLRLAITYIGFM). The interval 145-175 (TPSNSHKSRSDVYGSMNGHHQAPPPAIHPHH) is disordered.

Its subcellular location is the nucleus. Functionally, transcription factor that binds to the E-box and functions as inhibitor of transcription. DNA binding requires dimerization with an E protein. Inhibits transcription activation by ASCL1/MASH1 by sequestering E proteins. The sequence is that of Protein Fer3 (fer3) from Drosophila melanogaster (Fruit fly).